Here is a 61-residue protein sequence, read N- to C-terminus: Small ribosomal subunit protein uS14 (61 aa).

Zn(2+)-binding residues include Cys-24, Cys-27, Cys-40, and Cys-43.

It belongs to the universal ribosomal protein uS14 family. Zinc-binding uS14 subfamily. As to quaternary structure, part of the 30S ribosomal subunit. Contacts proteins S3 and S10. Zn(2+) serves as cofactor.

Binds 16S rRNA, required for the assembly of 30S particles and may also be responsible for determining the conformation of the 16S rRNA at the A site. The polypeptide is Small ribosomal subunit protein uS14 (Desulfosudis oleivorans (strain DSM 6200 / JCM 39069 / Hxd3) (Desulfococcus oleovorans)).